The primary structure comprises 84 residues: ORF8b protein (84 aa).

In terms of domain architecture, SARS ORF8 Ig-like spans 1–82; the sequence is MCLKILVRYN…RDVLVVLNKR (82 aa). A disulfide bridge connects residues C22 and C40.

It localises to the host cytoplasm. The protein localises to the host nucleus. Non-structural protein which is dispensable for virus replication in cell culture. This is ORF8b protein from Severe acute respiratory syndrome coronavirus (SARS-CoV).